Here is a 95-residue protein sequence, read N- to C-terminus: Aspartyl/glutamyl-tRNA(Asn/Gln) amidotransferase subunit C (95 aa).

This sequence belongs to the GatC family. As to quaternary structure, heterotrimer of A, B and C subunits.

It carries out the reaction L-glutamyl-tRNA(Gln) + L-glutamine + ATP + H2O = L-glutaminyl-tRNA(Gln) + L-glutamate + ADP + phosphate + H(+). The enzyme catalyses L-aspartyl-tRNA(Asn) + L-glutamine + ATP + H2O = L-asparaginyl-tRNA(Asn) + L-glutamate + ADP + phosphate + 2 H(+). In terms of biological role, allows the formation of correctly charged Asn-tRNA(Asn) or Gln-tRNA(Gln) through the transamidation of misacylated Asp-tRNA(Asn) or Glu-tRNA(Gln) in organisms which lack either or both of asparaginyl-tRNA or glutaminyl-tRNA synthetases. The reaction takes place in the presence of glutamine and ATP through an activated phospho-Asp-tRNA(Asn) or phospho-Glu-tRNA(Gln). This is Aspartyl/glutamyl-tRNA(Asn/Gln) amidotransferase subunit C from Shouchella clausii (strain KSM-K16) (Alkalihalobacillus clausii).